A 277-amino-acid polypeptide reads, in one-letter code: Phosphatidylglycerol--prolipoprotein diacylglyceryl transferase (277 aa).

The next 4 helical transmembrane spans lie at 18–38, 51–71, 89–109, and 116–136; these read ISVK…LLLA, IIVD…RIYY, IWHG…TAII, and ISFW…QAIG. Arginine 137 lines the a 1,2-diacyl-sn-glycero-3-phospho-(1'-sn-glycerol) pocket. The next 3 helical transmembrane spans lie at 177–197, 205–225, and 235–255; these read QPTF…LLII, GELF…IEGM, and FRVS…IIIY.

It belongs to the Lgt family.

It localises to the cell membrane. The enzyme catalyses L-cysteinyl-[prolipoprotein] + a 1,2-diacyl-sn-glycero-3-phospho-(1'-sn-glycerol) = an S-1,2-diacyl-sn-glyceryl-L-cysteinyl-[prolipoprotein] + sn-glycerol 1-phosphate + H(+). Its pathway is protein modification; lipoprotein biosynthesis (diacylglyceryl transfer). In terms of biological role, catalyzes the transfer of the diacylglyceryl group from phosphatidylglycerol to the sulfhydryl group of the N-terminal cysteine of a prolipoprotein, the first step in the formation of mature lipoproteins. This Listeria monocytogenes serotype 4a (strain HCC23) protein is Phosphatidylglycerol--prolipoprotein diacylglyceryl transferase.